The primary structure comprises 124 residues: MRHYEIVFMVHPDQSEQVPAMIERYTASVKEAGGQVHRLEDWGRRQLAYPINKLHKAHYVLMNVEAPQRVIDELETNFRYNDAVLRNLIVHTKAAVTEASPMVKAKESKVAEAVAEVESEEAGE.

Belongs to the bacterial ribosomal protein bS6 family.

Binds together with bS18 to 16S ribosomal RNA. The polypeptide is Small ribosomal subunit protein bS6 (Actinobacillus pleuropneumoniae serotype 5b (strain L20)).